Here is a 499-residue protein sequence, read N- to C-terminus: MDNMNHEELNDQLLVRREKLHNLREQGIDPFGKRFERTNATNDLLSLYGEFSKEELEEKEISVSIAGRIMTKRGKGKAGFAHIQDLHGQVQIYVRKDAVGDEEYELFKTADLGDLVGIEGKVFKTNVGELSVKATGFTLLTKSLRPLPDKYHGLKDVEQRYRQRYLDLITSMESRETFVTRSKIIREMRRYLDDNGYLEVETPMMHAIAGGASARPFITHHNALDMELYMRIAIELHLKRLIVGGLEKVYEIGRVFRNEGVSTRHNPEFTMIELYEAYADYKDIMKLTENMVAHIAKQVLGTTTIQYGDYEINLEPKWTRLHMVDAIKEHSGADFWNPMSVEEARELAKEHNVEIKDTMEVGHIINEFFEQKVEDKLIQPTFIYGHPVEISPLAKKNDEDPRFTDRFELFIVAREHANAFTELNDPIDQKERFEAQLKEREQGNDEAHMMDDDYIEALEYGMPPTGGLGIGIDRLVMLLTNAPSIRDVLLFPAMRHKQD.

Residues Glu-408 and Glu-415 each coordinate Mg(2+).

It belongs to the class-II aminoacyl-tRNA synthetase family. As to quaternary structure, homodimer. Requires Mg(2+) as cofactor.

It is found in the cytoplasm. The catalysed reaction is tRNA(Lys) + L-lysine + ATP = L-lysyl-tRNA(Lys) + AMP + diphosphate. The protein is Lysine--tRNA ligase of Bacillus cereus (strain AH820).